The sequence spans 493 residues: Probable mannosyl-oligosaccharide alpha-1,2-mannosidase 1B (493 aa).

The N-terminal stretch at 1 to 18 (MHLPSLSVALALVSSSLA) is a signal peptide. N-linked (GlcNAc...) asparagine glycans are attached at residues asparagine 87 and asparagine 174. Cysteine 324 and cysteine 353 are joined by a disulfide. Glutamate 367 serves as the catalytic Proton donor. Residue asparagine 489 is glycosylated (N-linked (GlcNAc...) asparagine).

Belongs to the glycosyl hydrolase 47 family. In terms of assembly, monomer. Ca(2+) serves as cofactor. Requires Mg(2+) as cofactor.

It is found in the cytoplasmic vesicle lumen. It catalyses the reaction N(4)-(alpha-D-Man-(1-&gt;2)-alpha-D-Man-(1-&gt;2)-alpha-D-Man-(1-&gt;3)-[alpha-D-Man-(1-&gt;2)-alpha-D-Man-(1-&gt;3)-[alpha-D-Man-(1-&gt;2)-alpha-D-Man-(1-&gt;6)]-alpha-D-Man-(1-&gt;6)]-beta-D-Man-(1-&gt;4)-beta-D-GlcNAc-(1-&gt;4)-beta-D-GlcNAc)-L-asparaginyl-[protein] (N-glucan mannose isomer 9A1,2,3B1,2,3) + 4 H2O = N(4)-(alpha-D-Man-(1-&gt;3)-[alpha-D-Man-(1-&gt;3)-[alpha-D-Man-(1-&gt;6)]-alpha-D-Man-(1-&gt;6)]-beta-D-Man-(1-&gt;4)-beta-D-GlcNAc-(1-&gt;4)-beta-D-GlcNAc)-L-asparaginyl-[protein] (N-glucan mannose isomer 5A1,2) + 4 beta-D-mannose. The catalysed reaction is N(4)-(alpha-D-Man-(1-&gt;2)-alpha-D-Man-(1-&gt;2)-alpha-D-Man-(1-&gt;3)-[alpha-D-Man-(1-&gt;3)-[alpha-D-Man-(1-&gt;2)-alpha-D-Man-(1-&gt;6)]-alpha-D-Man-(1-&gt;6)]-beta-D-Man-(1-&gt;4)-beta-D-GlcNAc-(1-&gt;4)-beta-D-GlcNAc)-L-asparaginyl-[protein] (N-glucan mannose isomer 8A1,2,3B1,3) + 3 H2O = N(4)-(alpha-D-Man-(1-&gt;3)-[alpha-D-Man-(1-&gt;3)-[alpha-D-Man-(1-&gt;6)]-alpha-D-Man-(1-&gt;6)]-beta-D-Man-(1-&gt;4)-beta-D-GlcNAc-(1-&gt;4)-beta-D-GlcNAc)-L-asparaginyl-[protein] (N-glucan mannose isomer 5A1,2) + 3 beta-D-mannose. It participates in protein modification; protein glycosylation. Functionally, involved in the maturation of Asn-linked oligosaccharides. Progressively trims alpha-1,2-linked mannose residues from Man(9)GlcNAc(2) to produce Man(5)GlcNAc(2). This is Probable mannosyl-oligosaccharide alpha-1,2-mannosidase 1B (mns1B) from Aspergillus fumigatus (strain CBS 144.89 / FGSC A1163 / CEA10) (Neosartorya fumigata).